A 258-amino-acid chain; its full sequence is MQADKSEQRAVTRLCIQCALYLLQHGAESALVEELSTRLGRALGMDSVESAISSNAIVLTTIKDGECLTSTRKNSDRGINMHVVTEVQHIVIMAEHKLLDYKDVEKRFSQIKPLRYPRWLLVLMVGLSCACFCKLNNGGWDGAVVTFFASTVAMYIRQLLTHRSMHPQINFCITAFVATTISGLMLRLPAFSETPTIAMAASVLLLVPGFPLINAVADMFKGHINTGLARWAIASLLTLATCIGVVMAMTMWGLRGWA.

The next 5 helical transmembrane spans lie at 116–137 (YPRW…KLNN), 143–160 (AVVT…RQLL), 171–191 (FCIT…LPAF), 197–217 (IAMA…NAVA), and 231–251 (WAIA…AMTM).

Belongs to the ThrE exporter (TC 2.A.79) family. In terms of assembly, the transporter is composed of YjjB and YjjP.

The protein localises to the cell inner membrane. In terms of biological role, involved in succinate export with YjjB. Both proteins are required for export. Participates in succinate export, but also in the export of other dicarboxylates, such as fumarate and malate. Contributes to succinate production under both aerobic and anaerobic conditions, and increases fumarate and malate production during anaerobic succinate production. The polypeptide is Probable succinate transporter subunit YjjP (Klebsiella aerogenes (strain ATCC 13048 / DSM 30053 / CCUG 1429 / JCM 1235 / KCTC 2190 / NBRC 13534 / NCIMB 10102 / NCTC 10006 / CDC 819-56) (Enterobacter aerogenes)).